We begin with the raw amino-acid sequence, 248 residues long: Ras-like protein family member 11B (248 aa).

Positions 29 to 246 (AGRRLVKIAV…ALSAKVRTVT (218 aa)) are small GTPase-like. Residues 40 to 47 (GASGVGKT), 87 to 94 (DTPGIQVH), and 152 to 155 (NKAD) each bind GTP. A disordered region spans residues 205-226 (QQPSSTPEKRRTSLIPRPKSPN).

It belongs to the small GTPase superfamily. Ras family. In terms of tissue distribution, widely expressed with highest levels in placenta and primary macrophages.

The catalysed reaction is GTP + H2O = GDP + phosphate + H(+). The chain is Ras-like protein family member 11B from Homo sapiens (Human).